A 201-amino-acid polypeptide reads, in one-letter code: Ribonuclease HII (201 aa).

Residues 12-201 (DLVAGVDEVG…VRELLDASVE (190 aa)) enclose the RNase H type-2 domain. A divalent metal cation-binding residues include D18, E19, and D110.

It belongs to the RNase HII family. The cofactor is Mn(2+). Mg(2+) serves as cofactor.

The protein resides in the cytoplasm. It carries out the reaction Endonucleolytic cleavage to 5'-phosphomonoester.. Endonuclease that specifically degrades the RNA of RNA-DNA hybrids. The chain is Ribonuclease HII from Pseudomonas paraeruginosa (strain DSM 24068 / PA7) (Pseudomonas aeruginosa (strain PA7)).